The following is a 172-amino-acid chain: Endoribonuclease YbeY (172 aa).

The Zn(2+) site is built by His137, His141, and His147.

Belongs to the endoribonuclease YbeY family. Zn(2+) serves as cofactor.

The protein localises to the cytoplasm. In terms of biological role, single strand-specific metallo-endoribonuclease involved in late-stage 70S ribosome quality control and in maturation of the 3' terminus of the 16S rRNA. In Dehalococcoides mccartyi (strain ATCC BAA-2266 / KCTC 15142 / 195) (Dehalococcoides ethenogenes (strain 195)), this protein is Endoribonuclease YbeY.